The following is a 197-amino-acid chain: Molybdenum cofactor guanylyltransferase (197 aa).

Residues L12–G14, K25, N53, D71, and D101 contribute to the GTP site. D101 contacts Mg(2+).

Belongs to the MobA family. In terms of assembly, monomer. The cofactor is Mg(2+).

The protein resides in the cytoplasm. The catalysed reaction is Mo-molybdopterin + GTP + H(+) = Mo-molybdopterin guanine dinucleotide + diphosphate. Functionally, transfers a GMP moiety from GTP to Mo-molybdopterin (Mo-MPT) cofactor (Moco or molybdenum cofactor) to form Mo-molybdopterin guanine dinucleotide (Mo-MGD) cofactor. In Bordetella pertussis (strain Tohama I / ATCC BAA-589 / NCTC 13251), this protein is Molybdenum cofactor guanylyltransferase.